Consider the following 502-residue polypeptide: Zinc finger C3HC-type protein 1 (502 aa).

Position 2 is an N-acetylalanine (Ala-2). The residue at position 24 (Ser-24) is a Phosphoserine. At Thr-28 the chain carries Phosphothreonine. Residues 35–74 (LIDEGIAPEEGGVDAQDTSATSQSVNGSPQAEQPSLESTS) form a disordered region. A compositionally biased stretch (polar residues) spans 50 to 72 (QDTSATSQSVNGSPQAEQPSLES). Phosphoserine occurs at positions 58 and 62. Thr-84 carries the post-translational modification Phosphothreonine. A C3HC-type zinc finger spans residues 102–156 (CAKYGWVTVECDMLKCSSCQAFLCASLQPAFDFDRYKQRCAELKKALCTAHEKFC). Residues 302–423 (SSPIPGLEGR…SSRSFFDPTS (122 aa)) form a disordered region. Phosphoserine occurs at positions 321 and 329. Thr-333 carries the post-translational modification Phosphothreonine. Ser-338, Ser-344, Ser-354, Ser-359, and Ser-370 each carry phosphoserine. The span at 351–360 (RTRSWDSSSP) shows a compositional bias: polar residues. Residues 371–380 (PTTRTRPVTR) are compositionally biased toward low complexity. The residue at position 381 (Ser-381) is a Phosphoserine. Thr-384 bears the Phosphothreonine mark. Ser-395 is subject to Phosphoserine. The Nuclear localization signal motif lies at 396 to 402 (PLRKAKR). Ser-407 and Ser-483 each carry phosphoserine. Residues 407-422 (SSSSSDTSSRSFFDPT) show a composition bias toward low complexity.

Interacts with TPR; this interaction mediates ZC3HC1 nuclear envelopes (NE)-association but also required for proper positioning of a substantial amount of TPR at the nuclear basket (NB). Phosphorylated. May also be weakly phosphorylated on Tyr residues.

It is found in the nucleus. The protein resides in the nucleus envelope. Required for proper positioning of a substantial amount of TPR at the nuclear basket (NB) through interaction with TPR. This Pongo abelii (Sumatran orangutan) protein is Zinc finger C3HC-type protein 1 (ZC3HC1).